A 466-amino-acid polypeptide reads, in one-letter code: Ribulose bisphosphate carboxylase large chain (466 aa).

K4 carries the N6,N6,N6-trimethyllysine modification. Substrate contacts are provided by N113 and T163. Catalysis depends on K165, which acts as the Proton acceptor. K167 provides a ligand contact to substrate. 3 residues coordinate Mg(2+): K191, D193, and E194. At K191 the chain carries N6-carboxylysine. The active-site Proton acceptor is the H284. Positions 285, 317, and 369 each coordinate substrate.

The protein belongs to the RuBisCO large chain family. Type I subfamily. In terms of assembly, heterohexadecamer of 8 large chains and 8 small chains; disulfide-linked. The disulfide link is formed within the large subunit homodimers. Mg(2+) serves as cofactor. Post-translationally, the disulfide bond which can form in the large chain dimeric partners within the hexadecamer appears to be associated with oxidative stress and protein turnover.

It is found in the plastid. The protein localises to the chloroplast. It catalyses the reaction 2 (2R)-3-phosphoglycerate + 2 H(+) = D-ribulose 1,5-bisphosphate + CO2 + H2O. The enzyme catalyses D-ribulose 1,5-bisphosphate + O2 = 2-phosphoglycolate + (2R)-3-phosphoglycerate + 2 H(+). RuBisCO catalyzes two reactions: the carboxylation of D-ribulose 1,5-bisphosphate, the primary event in carbon dioxide fixation, as well as the oxidative fragmentation of the pentose substrate in the photorespiration process. Both reactions occur simultaneously and in competition at the same active site. This Justicia odora (Water willow) protein is Ribulose bisphosphate carboxylase large chain.